Consider the following 211-residue polypeptide: N-(5'-phosphoribosyl)anthranilate isomerase (211 aa).

It belongs to the TrpF family.

It catalyses the reaction N-(5-phospho-beta-D-ribosyl)anthranilate = 1-(2-carboxyphenylamino)-1-deoxy-D-ribulose 5-phosphate. The protein operates within amino-acid biosynthesis; L-tryptophan biosynthesis; L-tryptophan from chorismate: step 3/5. The polypeptide is N-(5'-phosphoribosyl)anthranilate isomerase (Methanococcus maripaludis (strain DSM 14266 / JCM 13030 / NBRC 101832 / S2 / LL)).